The sequence spans 370 residues: Histidinol-phosphate aminotransferase 3 (370 aa).

The residue at position 229 (K229) is an N6-(pyridoxal phosphate)lysine.

It belongs to the class-II pyridoxal-phosphate-dependent aminotransferase family. Histidinol-phosphate aminotransferase subfamily. In terms of assembly, homodimer. Pyridoxal 5'-phosphate serves as cofactor.

The catalysed reaction is L-histidinol phosphate + 2-oxoglutarate = 3-(imidazol-4-yl)-2-oxopropyl phosphate + L-glutamate. Its pathway is amino-acid biosynthesis; L-histidine biosynthesis; L-histidine from 5-phospho-alpha-D-ribose 1-diphosphate: step 7/9. The chain is Histidinol-phosphate aminotransferase 3 (hisC3) from Rhizobium meliloti (strain 1021) (Ensifer meliloti).